A 232-amino-acid polypeptide reads, in one-letter code: Ribonuclease 3 (232 aa).

An RNase III domain is found at 10 to 135 (ALKIYEATGY…LIGAMYMDGG (126 aa)). E48 contributes to the Mg(2+) binding site. Residue D52 is part of the active site. The Mg(2+) site is built by N121 and E124. E124 is an active-site residue. In terms of domain architecture, DRBM spans 161–230 (DPKTALQEWV…AKLMLKKITE (70 aa)).

It belongs to the ribonuclease III family. Homodimer. Requires Mg(2+) as cofactor.

It localises to the cytoplasm. The catalysed reaction is Endonucleolytic cleavage to 5'-phosphomonoester.. Its function is as follows. Digests double-stranded RNA. Involved in the processing of primary rRNA transcript to yield the immediate precursors to the large and small rRNAs (23S and 16S). Processes some mRNAs, and tRNAs when they are encoded in the rRNA operon. Processes pre-crRNA and tracrRNA of type II CRISPR loci if present in the organism. This chain is Ribonuclease 3, found in Anaplasma marginale (strain Florida).